The primary structure comprises 243 residues: MSKLIVPQWPQPKGVAACSSTRIGGVSLPPYDSLNLGAHCGDNPDHVEENRKRLFAAGNLPSKPVWLEQVHGKDVLKLTGEPYASKRADASYSNTPGTVCAVMTADCLPVLFCNRAGTEVAAAHAGWRGLCAGVLEETVSCFADNPENILAWLGPAIGPRAFEVGGEVREAFMAVDAKASAAFIQHGDKYLADIYQLARQRLANVGVEQIFGGDRCTYTENETFFSYRRDKTTGRMASFIWLI.

Residues His71, Cys107, and His124 each contribute to the Zn(2+) site.

The protein belongs to the purine nucleoside phosphorylase YfiH/LACC1 family. As to quaternary structure, homodimer. The cofactor is Cu(2+). It depends on Zn(2+) as a cofactor.

The enzyme catalyses adenosine + phosphate = alpha-D-ribose 1-phosphate + adenine. It carries out the reaction S-methyl-5'-thioadenosine + phosphate = 5-(methylsulfanyl)-alpha-D-ribose 1-phosphate + adenine. The catalysed reaction is inosine + phosphate = alpha-D-ribose 1-phosphate + hypoxanthine. It catalyses the reaction adenosine + H2O + H(+) = inosine + NH4(+). In terms of biological role, purine nucleoside enzyme that catalyzes the phosphorolysis of adenosine and inosine nucleosides, yielding D-ribose 1-phosphate and the respective free bases, adenine and hypoxanthine. Also catalyzes the phosphorolysis of S-methyl-5'-thioadenosine into adenine and S-methyl-5-thio-alpha-D-ribose 1-phosphate. Also has adenosine deaminase activity. May also act as a polyphenol oxidase: able to oxidize syringaldazine and 2,2'-azino-bis(3-ethylbenzthiazoline-6-sulfonic acid) (ABTS) in vitro. The protein is Purine nucleoside phosphorylase YfiH of Escherichia coli (strain K12).